The sequence spans 107 residues: Nucleoid-associated protein PPA0205 (107 aa).

The protein belongs to the YbaB/EbfC family. In terms of assembly, homodimer.

Its subcellular location is the cytoplasm. The protein resides in the nucleoid. Functionally, binds to DNA and alters its conformation. May be involved in regulation of gene expression, nucleoid organization and DNA protection. This Cutibacterium acnes (strain DSM 16379 / KPA171202) (Propionibacterium acnes) protein is Nucleoid-associated protein PPA0205.